Reading from the N-terminus, the 186-residue chain is Inosine/xanthosine triphosphatase (186 aa).

Residue glutamine 75 participates in Mg(2+) binding.

The protein belongs to the YjjX NTPase family. In terms of assembly, homodimer. The cofactor is Mg(2+). Mn(2+) is required as a cofactor.

The enzyme catalyses XTP + H2O = XDP + phosphate + H(+). It catalyses the reaction ITP + H2O = IDP + phosphate + H(+). In terms of biological role, phosphatase that hydrolyzes non-canonical purine nucleotides such as XTP and ITP to their respective diphosphate derivatives. Probably excludes non-canonical purines from DNA/RNA precursor pool, thus preventing their incorporation into DNA/RNA and avoiding chromosomal lesions. The chain is Inosine/xanthosine triphosphatase from Shewanella baltica (strain OS185).